We begin with the raw amino-acid sequence, 346 residues long: MHLNKIRGKNMKKSHILGIIICIILIVGFFISFDSTFLDNPKMMSKSKNNIRNAENLTNISKNSNNLKFLWAYQLQNADIDEIANSNFTLIVIDYSKDGTENGKYSEEEIEKLKKAGKIPIAYISIGEAEDYRFYWDNEWLKNPPKWLGDENPEWEGCYAVKYWHPEWKKIIFSYLDKIIQQGFCGVYLDKVDEFEYWAENGYDEDFTAKEMIKFIVEISNYCRNKTNNSFIIIPQNGERLLEYDKHGKLLNTVSGWAVEDLFYDGVEQKTEEEINERIKLLDKVKDSGKFVLVVDYVDDGTKTNENLKRVEDFINKSLDKGYVPYVAKSDRELDELNTWWLKLIN.

A helical membrane pass occupies residues 16 to 36 (ILGIIICIILIVGFFISFDST).

Its subcellular location is the membrane. This is an uncharacterized protein from Methanocaldococcus jannaschii (strain ATCC 43067 / DSM 2661 / JAL-1 / JCM 10045 / NBRC 100440) (Methanococcus jannaschii).